Consider the following 587-residue polypeptide: Inorganic phosphate transporter 2-1, chloroplastic (587 aa).

The transit peptide at 1 to 71 directs the protein to the chloroplast; sequence MTLPYRFSSV…VCPLASFSSY (71 aa). The segment at 74–106 is disordered; that stretch reads SEGEEQHHADQPIQNPHESSTVSNESDGKGNAE. Polar residues predominate over residues 85 to 98; that stretch reads PIQNPHESSTVSNE. The next 12 membrane-spanning stretches (helical) occupy residues 127 to 147, 154 to 174, 195 to 215, 233 to 253, 265 to 285, 289 to 309, 327 to 347, 352 to 372, 413 to 433, 465 to 485, 523 to 543, and 559 to 579; these read AISI…KSLG, TKLL…NIGA, AVMT…THVT, MLLF…LQVA, CIVG…AVFW, AKVA…SFLV, AAAA…SAAL, IFPI…IVFD, LEIV…FMSF, IVIP…GLTM, LGLP…VGFA, and ASWL…TWIF.

Belongs to the inorganic phosphate transporter (PiT) (TC 2.A.20.2) family. Mostly expressed in young green tissues. Present in both auto- and heterotrophic tissues. Also expressed in root stele.

It is found in the plastid. It localises to the chloroplast inner membrane. Functionally, low affinity H(+)/Pi chloroplastic cotransporter. Involved in inorganic phosphate (orthophosphate, Pi) uptake in green parts of plants in Pi-sufficient conditions. Required for Pi retranslocation during Pi deprivation. This Arabidopsis thaliana (Mouse-ear cress) protein is Inorganic phosphate transporter 2-1, chloroplastic (PHT2-1).